Reading from the N-terminus, the 185-residue chain is ATP synthase subunit b, chloroplastic (185 aa).

Residues 31-49 (LINSGVVLGLPVYSGKGVL) traverse the membrane as a helical segment.

It belongs to the ATPase B chain family. In terms of assembly, F-type ATPases have 2 components, F(1) - the catalytic core - and F(0) - the membrane proton channel. F(1) has five subunits: alpha(3), beta(3), gamma(1), delta(1), epsilon(1). F(0) has four main subunits: a(1), b(1), b'(1) and c(10-14). The alpha and beta chains form an alternating ring which encloses part of the gamma chain. F(1) is attached to F(0) by a central stalk formed by the gamma and epsilon chains, while a peripheral stalk is formed by the delta, b and b' chains.

Its subcellular location is the plastid. The protein resides in the chloroplast thylakoid membrane. Functionally, f(1)F(0) ATP synthase produces ATP from ADP in the presence of a proton or sodium gradient. F-type ATPases consist of two structural domains, F(1) containing the extramembraneous catalytic core and F(0) containing the membrane proton channel, linked together by a central stalk and a peripheral stalk. During catalysis, ATP synthesis in the catalytic domain of F(1) is coupled via a rotary mechanism of the central stalk subunits to proton translocation. In terms of biological role, component of the F(0) channel, it forms part of the peripheral stalk, linking F(1) to F(0). This Huperzia lucidula (Shining clubmoss) protein is ATP synthase subunit b, chloroplastic.